Reading from the N-terminus, the 782-residue chain is MKISSGAINFSTIPNQVKKLITSIREHTKNGLTSKITSVKNTHTSLNEKFKTGKDSPIEFALPQKIKDFFQPKDKNTLNKTLITVKNIKDTNNAGKKNISAEDVSKMNAAFMRKHIANQTCDYNYRMTGAAPLPGGVSVSANNRPTVSEGRTPPVSPSLSLQATSSPSSPADWAKKLTDAVLRQKAGETLTAADRDFSNADFRNITFSKILPPSFMERDGDIIKGFNFSNSKFTYSDISHLHFDECRFTYSTLSDVVCSNTKFSNSDMNEVFLQYSITTQQQPSFIDTTLKNTLIRHKANLSGVILNEPDNSSPPSVSGGGNFIRLGDIWLQMPLLWTENAVDGFLNHEHNNGKSILMTIDSLPDKYSQEKVQAMEDLVKSLRGGRLTEACIRPVESSLVSVLAHPPYTQSALISEWLGPVQERFFAHQCQTYNDVPLPAPDTYYQQRILPVLLDSFDRNSAAMTTHSGLFNQVILHCMTGVDCTDGTRQKAAALYEQYLAHPAVSPHIHNGLFGNYDGSPDWTTRAADNFLLLSSQDSDTAMMLSTDTLLTMLNPTPDTAWDNFYLLRAGENVSTAQISPVELFRHDFPVFLAAFNQQATQRRFGELIDIILSTEEHGELNQQFLAATNQKHSTVKLIDDASVSRLATIFDPLLPEGKLSPAHYQHILSAYHLTDATPQKQAETLFCLSTAFARYSSSAIFGTEHDSPPALRGYAEALMQKAWELSPAIFPSSEQFTEWSDRFHGLHGAFTCTSVVADSMQRHARKYFPSVLSSILPLAWA.

Residues 137–171 (VSVSANNRPTVSEGRTPPVSPSLSLQATSSPSSPA) are disordered. The segment covering 157 to 171 (PSLSLQATSSPSSPA) has biased composition (low complexity). The active-site Glycyl thioester intermediate is the Cys753.

It belongs to the SopA E3 ligase family. Ubiquitinated in the presence of host E1 ubiquitin-activating enzyme, E2 ubiquitin-conjugating enzyme and ubiquitin.

The protein resides in the secreted. Its subcellular location is the host cell. It catalyses the reaction S-ubiquitinyl-[E2 ubiquitin-conjugating enzyme]-L-cysteine + [acceptor protein]-L-lysine = [E2 ubiquitin-conjugating enzyme]-L-cysteine + N(6)-ubiquitinyl-[acceptor protein]-L-lysine.. Effector proteins function to alter host cell physiology and promote bacterial survival in host tissues. This protein is an E3 ubiquitin ligase that interferes with host's ubiquitination pathway. For instance, prevents host innate immune response by ubiquitinating and thus sending to degradation host E3 ubiquitin ligases TRIM56 and TRIM65. This is E3 ubiquitin-protein ligase SopA (sopA) from Salmonella typhimurium (strain 14028s / SGSC 2262).